Here is a 142-residue protein sequence, read N- to C-terminus: 3-hydroxyacyl-[acyl-carrier-protein] dehydratase FabZ (142 aa).

His48 is an active-site residue.

The protein belongs to the thioester dehydratase family. FabZ subfamily.

The protein localises to the cytoplasm. It catalyses the reaction a (3R)-hydroxyacyl-[ACP] = a (2E)-enoyl-[ACP] + H2O. Functionally, involved in unsaturated fatty acids biosynthesis. Catalyzes the dehydration of short chain beta-hydroxyacyl-ACPs and long chain saturated and unsaturated beta-hydroxyacyl-ACPs. This chain is 3-hydroxyacyl-[acyl-carrier-protein] dehydratase FabZ, found in Ruminiclostridium cellulolyticum (strain ATCC 35319 / DSM 5812 / JCM 6584 / H10) (Clostridium cellulolyticum).